Here is a 159-residue protein sequence, read N- to C-terminus: Putative ribosomal RNA large subunit methyltransferase H (159 aa).

Residues leucine 76, glycine 108, and 127–132 (FSKMTF) contribute to the S-adenosyl-L-methionine site.

Belongs to the RNA methyltransferase RlmH family.

Its subcellular location is the cytoplasm. It carries out the reaction pseudouridine(1915) in 23S rRNA + S-adenosyl-L-methionine = N(3)-methylpseudouridine(1915) in 23S rRNA + S-adenosyl-L-homocysteine + H(+). Functionally, specifically methylates the pseudouridine at position 1915 (m3Psi1915) in 23S rRNA. The protein is Putative ribosomal RNA large subunit methyltransferase H of Methanococcus vannielii (strain ATCC 35089 / DSM 1224 / JCM 13029 / OCM 148 / SB).